Reading from the N-terminus, the 276-residue chain is uncharacterized protein (276 aa).

Positions 20–137 constitute an AB hydrolase-1 domain; it reads PVLIFIPGAN…PPINTFLPDS (118 aa).

The protein belongs to the AB hydrolase superfamily.

This is an uncharacterized protein from Staphylococcus aureus (strain MRSA252).